Here is an 80-residue protein sequence, read N- to C-terminus: Putative ATP-dependent Clp protease proteolytic subunit (80 aa).

Residue His19 is part of the active site.

It belongs to the peptidase S14 family. As to quaternary structure, component of the chloroplastic Clp protease core complex.

It localises to the plastid. The protein localises to the chloroplast. The catalysed reaction is Hydrolysis of proteins to small peptides in the presence of ATP and magnesium. alpha-casein is the usual test substrate. In the absence of ATP, only oligopeptides shorter than five residues are hydrolyzed (such as succinyl-Leu-Tyr-|-NHMec, and Leu-Tyr-Leu-|-Tyr-Trp, in which cleavage of the -Tyr-|-Leu- and -Tyr-|-Trp bonds also occurs).. Cleaves peptides in various proteins in a process that requires ATP hydrolysis. Has a chymotrypsin-like activity. Plays a major role in the degradation of misfolded proteins. This Pinus strobus (Eastern white pine) protein is Putative ATP-dependent Clp protease proteolytic subunit.